A 460-amino-acid chain; its full sequence is Acetyl-CoA decarbonylase/synthase complex subunit beta (460 aa).

Cys188, Cys191, Cys277, and Cys279 together coordinate [Ni-Fe-S] cluster. Over residues 402-416 (EETEPEEEEVEEAYP) the composition is skewed to acidic residues. Residues 402–422 (EETEPEEEEVEEAYPEETPIP) are disordered.

The protein belongs to the CdhC family. Monomer. The ACDS complex is made up of alpha, epsilon, beta, gamma and delta chains with a probable stoichiometry of (alpha(2)epsilon(2))(4)-beta(8)-(gamma(1)delta(1))(8). The cofactor is [Ni-Fe-S] cluster.

It catalyses the reaction Co(I)-[corrinoid Fe-S protein] + acetyl-CoA + H(+) = methyl-Co(III)-[corrinoid Fe-S protein] + CO + CoA. Part of a complex that catalyzes the reversible cleavage of acetyl-CoA, allowing autotrophic growth from CO(2). The alpha-epsilon complex generates CO from CO(2), while the beta subunit (this protein) combines the CO with CoA and a methyl group to form acetyl-CoA. The methyl group, which is incorporated into acetyl-CoA, is transferred to the beta subunit by a corrinoid iron-sulfur protein (the gamma-delta complex). The polypeptide is Acetyl-CoA decarbonylase/synthase complex subunit beta (Methanothermobacter thermautotrophicus (strain ATCC 29096 / DSM 1053 / JCM 10044 / NBRC 100330 / Delta H) (Methanobacterium thermoautotrophicum)).